We begin with the raw amino-acid sequence, 512 residues long: Probable cytosol aminopeptidase (512 aa).

Positions 281 and 286 each coordinate Mn(2+). K293 is a catalytic residue. Residues D304, D363, and E365 each contribute to the Mn(2+) site. The active site involves R367.

The protein belongs to the peptidase M17 family. Requires Mn(2+) as cofactor.

It is found in the cytoplasm. The enzyme catalyses Release of an N-terminal amino acid, Xaa-|-Yaa-, in which Xaa is preferably Leu, but may be other amino acids including Pro although not Arg or Lys, and Yaa may be Pro. Amino acid amides and methyl esters are also readily hydrolyzed, but rates on arylamides are exceedingly low.. It catalyses the reaction Release of an N-terminal amino acid, preferentially leucine, but not glutamic or aspartic acids.. Functionally, presumably involved in the processing and regular turnover of intracellular proteins. Catalyzes the removal of unsubstituted N-terminal amino acids from various peptides. The sequence is that of Probable cytosol aminopeptidase from Koribacter versatilis (strain Ellin345).